The primary structure comprises 228 residues: L-ribulose-5-phosphate 4-epimerase UlaF (228 aa).

Residues 26-27 (GN), 43-44 (SG), and 72-73 (SS) each bind substrate. Zn(2+) is bound by residues D74, H93, and H95. D118 serves as the catalytic Proton donor/acceptor. A Zn(2+)-binding site is contributed by H167. Catalysis depends on Y225, which acts as the Proton donor/acceptor.

It belongs to the aldolase class II family. AraD/FucA subfamily. It depends on Zn(2+) as a cofactor.

It catalyses the reaction L-ribulose 5-phosphate = D-xylulose 5-phosphate. The protein operates within cofactor degradation; L-ascorbate degradation; D-xylulose 5-phosphate from L-ascorbate: step 4/4. Its function is as follows. Catalyzes the isomerization of L-ribulose 5-phosphate to D-xylulose 5-phosphate. Is involved in the anaerobic L-ascorbate utilization. The sequence is that of L-ribulose-5-phosphate 4-epimerase UlaF from Escherichia coli (strain K12 / MC4100 / BW2952).